The primary structure comprises 268 residues: Undecaprenyl-diphosphatase (268 aa).

7 helical membrane-spanning segments follow: residues 41–61 (LAYSLGLFLEAASVLAALIYF), 81–101 (WLTYVIVTTAATGAVGIPLYM), 106–126 (YLLLGASAGWLMVVLGVAVIF), 146–166 (MTLGHMALVGLAQALSVLPGI), 191–211 (FVLVPIAGLGATALAYLSEGG), 213–233 (VATPEVITAMLIGLVVSLVTI), and 245–265 (VTLVNIVVGTLAIAGGITRIL).

This sequence belongs to the UppP family.

The protein localises to the cell membrane. The catalysed reaction is di-trans,octa-cis-undecaprenyl diphosphate + H2O = di-trans,octa-cis-undecaprenyl phosphate + phosphate + H(+). Functionally, catalyzes the dephosphorylation of undecaprenyl diphosphate (UPP). The polypeptide is Undecaprenyl-diphosphatase (Pyrobaculum islandicum (strain DSM 4184 / JCM 9189 / GEO3)).